Consider the following 230-residue polypeptide: 7-cyano-7-deazaguanine synthase (230 aa).

ATP is bound at residue 8–18 (LSGGMDSAVVT). Zn(2+) is bound by residues Cys-186, Cys-196, Cys-199, and Cys-202.

This sequence belongs to the QueC family. It depends on Zn(2+) as a cofactor.

The enzyme catalyses 7-carboxy-7-deazaguanine + NH4(+) + ATP = 7-cyano-7-deazaguanine + ADP + phosphate + H2O + H(+). It functions in the pathway purine metabolism; 7-cyano-7-deazaguanine biosynthesis. Functionally, catalyzes the ATP-dependent conversion of 7-carboxy-7-deazaguanine (CDG) to 7-cyano-7-deazaguanine (preQ(0)). This is 7-cyano-7-deazaguanine synthase from Xylella fastidiosa (strain M23).